A 337-amino-acid polypeptide reads, in one-letter code: Probable deoxyhypusine synthase (337 aa).

Catalysis depends on K308, which acts as the Nucleophile.

It belongs to the deoxyhypusine synthase family. NAD(+) is required as a cofactor.

The enzyme catalyses [eIF5A protein]-L-lysine + spermidine = [eIF5A protein]-deoxyhypusine + propane-1,3-diamine. Its pathway is protein modification; eIF5A hypusination. Functionally, catalyzes the NAD-dependent oxidative cleavage of spermidine and the subsequent transfer of the butylamine moiety of spermidine to the epsilon-amino group of a specific lysine residue of the eIF-5A precursor protein to form the intermediate deoxyhypusine residue. This Thermococcus kodakarensis (strain ATCC BAA-918 / JCM 12380 / KOD1) (Pyrococcus kodakaraensis (strain KOD1)) protein is Probable deoxyhypusine synthase.